An 89-amino-acid chain; its full sequence is Small ribosomal subunit protein uS15 (89 aa).

The protein belongs to the universal ribosomal protein uS15 family. In terms of assembly, part of the 30S ribosomal subunit. Forms a bridge to the 50S subunit in the 70S ribosome, contacting the 23S rRNA.

One of the primary rRNA binding proteins, it binds directly to 16S rRNA where it helps nucleate assembly of the platform of the 30S subunit by binding and bridging several RNA helices of the 16S rRNA. Functionally, forms an intersubunit bridge (bridge B4) with the 23S rRNA of the 50S subunit in the ribosome. The polypeptide is Small ribosomal subunit protein uS15 (Corynebacterium glutamicum (strain R)).